Reading from the N-terminus, the 130-residue chain is Ribonuclease P protein component (130 aa).

It belongs to the RnpA family. Consists of a catalytic RNA component (M1 or rnpB) and a protein subunit.

The enzyme catalyses Endonucleolytic cleavage of RNA, removing 5'-extranucleotides from tRNA precursor.. In terms of biological role, RNaseP catalyzes the removal of the 5'-leader sequence from pre-tRNA to produce the mature 5'-terminus. It can also cleave other RNA substrates such as 4.5S RNA. The protein component plays an auxiliary but essential role in vivo by binding to the 5'-leader sequence and broadening the substrate specificity of the ribozyme. The polypeptide is Ribonuclease P protein component (Desulfovibrio desulfuricans (strain ATCC 27774 / DSM 6949 / MB)).